We begin with the raw amino-acid sequence, 226 residues long: MTLTWQGDPIPEELYKMLSGHSIRSFDDLQRLLQGDSGKEDGAELDLNMTRSHSGGELESLARGKRSLGSLSVAEPAMIAECKTRTEVFEISRRLIDRTNANFLVWPPCVEVQRCSGCCNNRNVQCRPTQVQLRPVQVRKIEIVRKKPIFKKATVTLEDHLACKCEIVAAARAVTRSPGTSQEQRAKTTQSRVTIRTVRVRRPPKGKHRKCKHTHDKTALKETLGA.

Residues 201 to 215 (RRPPKGKHRKCKHTH) are compositionally biased toward basic residues. Residues 201-226 (RRPPKGKHRKCKHTHDKTALKETLGA) form a disordered region.

Belongs to the PDGF/VEGF growth factor family.

This Woolly monkey sarcoma virus (WMSV) protein is PDGF-related-transforming protein sis (V-SIS).